The sequence spans 258 residues: Sugar fermentation stimulation protein homolog (258 aa).

This sequence belongs to the SfsA family.

The sequence is that of Sugar fermentation stimulation protein homolog from Marinomonas sp. (strain MWYL1).